The primary structure comprises 289 residues: Probable branched-chain-amino-acid aminotransferase (289 aa).

At K154 the chain carries N6-(pyridoxal phosphate)lysine.

The protein belongs to the class-IV pyridoxal-phosphate-dependent aminotransferase family. It depends on pyridoxal 5'-phosphate as a cofactor.

It catalyses the reaction L-leucine + 2-oxoglutarate = 4-methyl-2-oxopentanoate + L-glutamate. It carries out the reaction L-isoleucine + 2-oxoglutarate = (S)-3-methyl-2-oxopentanoate + L-glutamate. The catalysed reaction is L-valine + 2-oxoglutarate = 3-methyl-2-oxobutanoate + L-glutamate. The protein operates within amino-acid biosynthesis; L-isoleucine biosynthesis; L-isoleucine from 2-oxobutanoate: step 4/4. It participates in amino-acid biosynthesis; L-leucine biosynthesis; L-leucine from 3-methyl-2-oxobutanoate: step 4/4. Its pathway is amino-acid biosynthesis; L-valine biosynthesis; L-valine from pyruvate: step 4/4. Its function is as follows. Acts on leucine, isoleucine and valine. In Rickettsia bellii (strain RML369-C), this protein is Probable branched-chain-amino-acid aminotransferase (ilvE).